We begin with the raw amino-acid sequence, 1127 residues long: Structural protein MDM1 (1127 aa).

The region spanning N85–Q273 is the PXA domain. Phosphoserine occurs at positions 670, 673, and 692. Residues S705 to K762 adopt a coiled-coil conformation. Residues T782–K905 enclose the PX domain.

It belongs to the sorting nexin family.

Its subcellular location is the cytoplasm. Essential for mitotic growth. Mediates organelle inheritance. This is Structural protein MDM1 (MDM1) from Saccharomyces cerevisiae (strain ATCC 204508 / S288c) (Baker's yeast).